The following is a 611-amino-acid chain: MSAPQPGSTDPAVIRNFCIIAHIDHGKSTLADRMLQITGVLDERSARAQYLDRMDIERERGITIKSQAVRMPWEVDGVTHLLNMIDTPGHVDFSYEVSRSLQACEGAILLVDAAQGIEAQTLANLYLALEADLEIIPVLNKIDLPGAESDRHAAEIAGIIGCDESEVLRVSAKTGEGVSDLLDTIVAKVPAPEGVADAPARALIFDSVYDTYRGVVTYVRVVDGALRHREKILMMSTGAAHEVLEIGVISPEMVPAQGLSVGEVGYLITGVKDVRQSRVGDTVTNASKPSEKDLGGYQHPKPMVYSGLFPIDAKDFPDLRDALDKLQLNDAALVYEPETSTALGFGFRVGFLGLLHMEIVRERLEREFDLDLISTAPSVVHHVLMEDGSTVAVTNPSEYPTSGRIAEVREPIVDATILSPAEYIGTILELCQQRRGVQQGLDYLSSDRVEIRYRLPLSEIVFDFFDQLKSRTKGYASLDYHEAGEQAADLVKVDILLNGDPVDALSSIVHRDKSYSYGVAMAAKLKELIPRQQFEVPVQAAIGARVIARETIRAVRKDVLAKCYGGDISRKRKLLEKQKAGKKRMKVVGSVEVPQEAFVAALRTGESTEKK.

Residues 12–193 form the tr-type G domain; that stretch reads AVIRNFCIIA…TIVAKVPAPE (182 aa). GTP contacts are provided by residues 24 to 29 and 140 to 143; these read DHGKST and NKID.

Belongs to the TRAFAC class translation factor GTPase superfamily. Classic translation factor GTPase family. LepA subfamily.

It localises to the cell membrane. It carries out the reaction GTP + H2O = GDP + phosphate + H(+). Functionally, required for accurate and efficient protein synthesis under certain stress conditions. May act as a fidelity factor of the translation reaction, by catalyzing a one-codon backward translocation of tRNAs on improperly translocated ribosomes. Back-translocation proceeds from a post-translocation (POST) complex to a pre-translocation (PRE) complex, thus giving elongation factor G a second chance to translocate the tRNAs correctly. Binds to ribosomes in a GTP-dependent manner. The protein is Elongation factor 4 of Cutibacterium acnes (strain DSM 16379 / KPA171202) (Propionibacterium acnes).